A 467-amino-acid chain; its full sequence is F-box only protein 6 (467 aa).

In terms of domain architecture, F-box spans 114-163 (QEIWQEFPQDLFEDVVSRLPMATFFQFRAVCRKWNALIDSDSFSRCFTEL). Kelch repeat units follow at residues 163–211 (LPQT…MASA), 252–305 (GMTL…NFKS), and 406–456 (CLGN…IACG).

The chain is F-box only protein 6 (FBX6) from Arabidopsis thaliana (Mouse-ear cress).